Here is an 887-residue protein sequence, read N- to C-terminus: Protein PTHB1 (887 aa).

Residues 1 to 407 are seven-bladed beta-propeller; the sequence is MSLFKARDWW…SQGVWPMTER (407 aa). Residues 685-765 are interaction with LZTL1; that stretch reads KDKTPAPLQH…FLPLQEDTQE (81 aa). The segment at 850 to 887 is disordered; it reads DLEERSVEQDSTELFTNHRHLTAETPRPEVSPLQGVSE.

As to quaternary structure, part of BBSome complex, that contains BBS1, BBS2, BBS4, BBS5, BBS7, BBS8/TTC8, BBS9 and BBIP10. Interacts with LZTL1; the interaction mediates the association of LZTL1 with the BBsome complex and regulates BBSome ciliary trafficking. Widely expressed. Expressed in adult heart, skeletal muscle, lung, liver, kidney, placenta and brain, and in fetal kidney, lung, liver and brain.

Its subcellular location is the cytoplasm. The protein localises to the cytoskeleton. It is found in the microtubule organizing center. It localises to the centrosome. The protein resides in the cell projection. Its subcellular location is the cilium membrane. The protein localises to the centriolar satellite. In terms of biological role, the BBSome complex is thought to function as a coat complex required for sorting of specific membrane proteins to the primary cilia. The BBSome complex is required for ciliogenesis but is dispensable for centriolar satellite function. This ciliogenic function is mediated in part by the Rab8 GDP/GTP exchange factor, which localizes to the basal body and contacts the BBSome. Rab8(GTP) enters the primary cilium and promotes extension of the ciliary membrane. Firstly the BBSome associates with the ciliary membrane and binds to RAB3IP/Rabin8, the guanosyl exchange factor (GEF) for Rab8 and then the Rab8-GTP localizes to the cilium and promotes docking and fusion of carrier vesicles to the base of the ciliary membrane. Required for proper BBSome complex assembly and its ciliary localization. This chain is Protein PTHB1 (BBS9), found in Homo sapiens (Human).